We begin with the raw amino-acid sequence, 371 residues long: Cytochrome b (371 aa).

A run of 4 helical transmembrane segments spans residues 25-45 (FGSM…FLAV), 69-90 (WMMQ…YIHI), 105-125 (WMSG…GYVL), and 170-190 (FFAL…LHVI). 2 residues coordinate heme b: His-75 and His-89. Residues His-174 and His-188 each contribute to the heme b site. An a ubiquinone-binding site is contributed by His-193. The next 4 membrane-spanning stretches (helical) occupy residues 218–238 (YKDF…VSFF), 280–300 (LGGA…PFTH), 312–332 (LYQL…WAAT), and 339–358 (FITI…ISIP).

This sequence belongs to the cytochrome b family. As to quaternary structure, the cytochrome bc1 complex contains 3 respiratory subunits (MT-CYB, CYC1 and UQCRFS1), 2 core proteins (UQCRC1 and UQCRC2) and probably 6 low-molecular weight proteins. It depends on heme b as a cofactor.

The protein localises to the mitochondrion inner membrane. Its function is as follows. Component of the ubiquinol-cytochrome c reductase complex (complex III or cytochrome b-c1 complex) that is part of the mitochondrial respiratory chain. The b-c1 complex mediates electron transfer from ubiquinol to cytochrome c. Contributes to the generation of a proton gradient across the mitochondrial membrane that is then used for ATP synthesis. The polypeptide is Cytochrome b (MT-CYB) (Malayopython reticulatus (Reticulate python)).